The chain runs to 352 residues: Sortase SrtE1 (352 aa).

Basic and acidic residues-rich tracts occupy residues 1-10 (MTALRPERDS) and 34-45 (RYEESAAGEENR). Positions 1 to 132 (MTALRPERDS…RQARARKPGA (132 aa)) are disordered. The Cytoplasmic segment spans residues 1 to 139 (MTALRPERDS…PGAAVVASRA (139 aa)). The segment at 15-79 (DQGSSYGQPY…TGPIGGGPDG (65 aa)) is required for protein stability. Residues 71 to 82 (GPIGGGPDGGGR) are compositionally biased toward gly residues. The segment covering 83–97 (AARRKAAKRRHGRRG) has biased composition (basic residues). Residues 140-160 (IGEIFITTGVLMLLFVTYQLW) traverse the membrane as a helical segment. The Extracellular portion of the chain corresponds to 161-352 (WTNVRAHAQA…SKGKPDALVS (192 aa)). Residues His251 and Cys320 contribute to the active site. Catalysis depends on Arg329, which acts as the Proton donor.

It belongs to the bacterial sortase family. Class E subfamily.

The protein localises to the cell membrane. It catalyses the reaction The enzyme catalyzes a cell wall sorting reaction in which a surface protein with a sorting signal containing a LPXTG motif is cleaved between the Thr and Gly residue. The resulting threonine carboxyl end of the protein is covalently attached to a pentaglycine cross-bridge of peptidoglycan.. In terms of biological role, transpeptidase that anchors surface proteins to the cell wall. Recognizes both Leu-Ala-x-Thr-Gly and Leu-Pro-x-Thr-Gly, with a preference for the former. Unlike the S.aureus sortase it cleaves not only the Thr-Gly motif but also the Ala-X bond; Ala-Glu and Ala-His bonds are better substrates than the Thr-Gly motif in vitro. Among its possible substrates are the chaplins ChpA, ChpB and ChpC; this enzyme is less important for ChpC attachment than is SrtE2. A double knockout mutant of srtE1 and srtE2 shows a developmental defect in aerial hyphae formation more dramatic than that due to chaplin deletion. The protein is Sortase SrtE1 of Streptomyces coelicolor (strain ATCC BAA-471 / A3(2) / M145).